The chain runs to 193 residues: Interferon type A3 (193 aa).

The N-terminal stretch at M1–A31 is a signal peptide. Intrachain disulfides connect C32–C129, C61–C155, and C68–C168. N-linked (GlcNAc...) asparagine glycosylation is found at N65, N71, N108, and N186.

The protein belongs to the alpha/beta interferon family.

The protein resides in the secreted. Its function is as follows. Has antiviral activities. This is Interferon type A3 (IFNA3) from Gallus gallus (Chicken).